An 809-amino-acid polypeptide reads, in one-letter code: Sucrose synthase 2 (809 aa).

The segment at 278 to 756 (MVFNVVILSP…GLQRIYERYT (479 aa)) is GT-B glycosyltransferase.

It belongs to the glycosyltransferase 1 family. Plant sucrose synthase subfamily.

The enzyme catalyses an NDP-alpha-D-glucose + D-fructose = a ribonucleoside 5'-diphosphate + sucrose + H(+). Its function is as follows. Sucrose-cleaving enzyme that provides UDP-glucose and fructose for various metabolic pathways. The sequence is that of Sucrose synthase 2 (SUS2) from Pisum sativum (Garden pea).